Reading from the N-terminus, the 1453-residue chain is NK-tumor recognition protein (1453 aa).

Residues 10-175 form the PPIase cyclophilin-type domain; the sequence is HFDIEINREP…ADVRVIDCGV (166 aa). Residues 187–625 form a disordered region; sequence KKRKKPTCSE…RWKPGQKPWK (439 aa). Over residues 195–213 the composition is skewed to low complexity; sequence SEGSDSSSRSSSSSESSSE. Residues 221–240 are compositionally biased toward basic residues; it reads IRRRRHKRRPKVRHAKKRRK. The segment covering 259 to 286 has biased composition (basic and acidic residues); it reads YSERSDVNEKRSVDSNTKREKPVVRPEE. A Glycyl lysine isopeptide (Lys-Gly) (interchain with G-Cter in SUMO2) cross-link involves residue K323. Residues 329–348 show a composition bias toward basic residues; it reads SGRKIKGRGTIRYHTPPRSR. A phosphoserine mark is found at S379, S401, and S416. A compositionally biased stretch (basic and acidic residues) spans 382–402; sequence KWSKGDKLSDPCSSRWDERSL. The segment covering 403 to 421 has biased composition (polar residues); sequence SQRSRSWSYNGYYSDLSTA. Residues 425–460 are compositionally biased toward basic residues; sequence DGHHKKHRKEKKFKHKKKAKKQKHCRRHRQTKKRRI. A compositionally biased stretch (basic and acidic residues) spans 514 to 531; sequence SSRDSYRSKSHSRSDSRG. Composition is skewed to low complexity over residues 532 to 546 and 554 to 565; these read SSRS…SRSL and SSRSGPRRTSIS. Glycyl lysine isopeptide (Lys-Gly) (interchain with G-Cter in SUMO2) cross-links involve residues K576 and K579. S611 bears the Phosphoserine mark. Residue K637 forms a Glycyl lysine isopeptide (Lys-Gly) (interchain with G-Cter in SUMO2) linkage. Phosphoserine is present on S646. Polar residues predominate over residues 651 to 661; it reads TNIKATVSSSS. The tract at residues 651 to 1453 is disordered; the sequence is TNIKATVSSS…RSPSESSRYS (803 aa). Residues K654 and K664 each participate in a glycyl lysine isopeptide (Lys-Gly) (interchain with G-Cter in SUMO2) cross-link. Low complexity-rich tracts occupy residues 682 to 726 and 736 to 749; these read RSSG…SSRS and SQHS…SVSS. Over residues 755-772 the composition is skewed to basic residues; it reads AMFRSNRKKSVTSHKRHR. Residues 773-789 are compositionally biased toward basic and acidic residues; that stretch reads SNSEKTLHSKYVRGREK. The span at 799 to 809 shows a compositional bias: low complexity; it reads SRSSLDYSSDS. 2 stretches are compositionally biased toward basic and acidic residues: residues 820-852 and 859-868; these read PEKE…ECPR and KDHSRDDSVS. Phosphoserine occurs at positions 880, 882, 884, and 900. Residues 887–902 are compositionally biased toward basic and acidic residues; sequence DVTKSRKSDPRRGSEK. The segment covering 903-913 has biased composition (acidic residues); it reads EEGEASSDSES. Low complexity predominate over residues 948–958; that stretch reads SSASESESSCS. The span at 966–982 shows a compositional bias: basic and acidic residues; that stretch reads EPQKQKHSKDDLKGDHT. Positions 983–1005 are enriched in basic residues; the sequence is KRAREKSKAKKDKKHKAPKRKQA. The span at 1030–1045 shows a compositional bias: basic and acidic residues; sequence DPKEKRHVSEKCEAVK. S1139 and S1148 each carry phosphoserine. Over residues 1170 to 1180 the composition is skewed to polar residues; the sequence is QESSMSESKTL. The span at 1189–1199 shows a compositional bias: low complexity; sequence SSTSVTSPVET. S1195 is subject to Phosphoserine. Residues K1208 and K1249 each participate in a glycyl lysine isopeptide (Lys-Gly) (interchain with G-Cter in SUMO2) cross-link. The interval 1303 to 1453 is arg/Ser tandem repeat-rich; the sequence is RSPHRSRSKS…RSPSESSRYS (151 aa). Residues 1322–1346 show a composition bias toward low complexity; it reads SVSYSHSRSRSRSSTSSYRSRSYSR. Over residues 1369–1379 the composition is skewed to basic residues; sequence HSHRTSSRSRS. Low complexity predominate over residues 1380–1401; sequence RSSSYDLHSRSRSYTYDSYYSR. A compositionally biased stretch (basic residues) spans 1416-1426; that stretch reads RGRSYNRRSRS.

The protein localises to the cell membrane. The enzyme catalyses [protein]-peptidylproline (omega=180) = [protein]-peptidylproline (omega=0). Its activity is regulated as follows. Inhibited by cyclosporin A (CsA). In terms of biological role, PPIase that catalyzes the cis-trans isomerization of proline imidic peptide bonds in oligopeptides and may therefore assist protein folding. Component of a putative tumor-recognition complex involved in the function of NK cells. The protein is NK-tumor recognition protein of Mus musculus (Mouse).